Reading from the N-terminus, the 938-residue chain is Phosphoenolpyruvate carboxylase (938 aa).

Catalysis depends on residues H151 and K591.

It belongs to the PEPCase type 1 family. The cofactor is Mg(2+).

It catalyses the reaction oxaloacetate + phosphate = phosphoenolpyruvate + hydrogencarbonate. Forms oxaloacetate, a four-carbon dicarboxylic acid source for the tricarboxylic acid cycle. The polypeptide is Phosphoenolpyruvate carboxylase (Roseiflexus castenholzii (strain DSM 13941 / HLO8)).